We begin with the raw amino-acid sequence, 232 residues long: Succinyl-CoA:3-ketoacid coenzyme A transferase subunit A (232 aa).

CoA is bound at residue 24-30 (GGFGLCG).

This sequence belongs to the 3-oxoacid CoA-transferase subunit A family. Heterodimer of a subunit A and a subunit B.

The catalysed reaction is a 3-oxo acid + succinyl-CoA = a 3-oxoacyl-CoA + succinate. The sequence is that of Succinyl-CoA:3-ketoacid coenzyme A transferase subunit A (scoA) from Helicobacter pylori (strain ATCC 700392 / 26695) (Campylobacter pylori).